Here is a 323-residue protein sequence, read N- to C-terminus: Tyrosine recombinase XerD (323 aa).

The 86-residue stretch at 21–106 folds into the Core-binding (CB) domain; that stretch reads AEDDQAIQRF…TLRGFYALCL (86 aa). A Tyr recombinase domain is found at 127-317; the sequence is SLPKALTESQ…ARQHLQTLHA (191 aa). Active-site residues include Arg-167, Lys-191, His-269, Arg-272, and His-295. The active-site O-(3'-phospho-DNA)-tyrosine intermediate is the Tyr-304.

Belongs to the 'phage' integrase family. XerD subfamily. Forms a cyclic heterotetrameric complex composed of two molecules of XerC and two molecules of XerD.

It localises to the cytoplasm. Site-specific tyrosine recombinase, which acts by catalyzing the cutting and rejoining of the recombining DNA molecules. The XerC-XerD complex is essential to convert dimers of the bacterial chromosome into monomers to permit their segregation at cell division. It also contributes to the segregational stability of plasmids. This is Tyrosine recombinase XerD from Xanthomonas campestris pv. campestris (strain ATCC 33913 / DSM 3586 / NCPPB 528 / LMG 568 / P 25).